The chain runs to 381 residues: MWRSLGLALALCLLPSGGTESQDQSSLCKQPPAWSIRDQDPMLNSNGSVTVVALLQASUYLCILQASKLEDLRVKLKKEGYSNISYIVVNHQGISSRLKYTHLKNKVSEHIPVYQQEENQTDVWTLLNGSKDDFLIYDRCGRLVYHLGLPFSFLTFPYVEEAIKIAYCEKKCGNCSLTTLKDEDFCKRVSLATVDKTVETPSPHYHHEHHHNHGHQHLGSSELSENQQPGAPNAPTHPAPPGLHHHHKHKGQHRQGHPENRDMPASEDLQDLQKKLCRKRCINQLLCKLPTDSELAPRSUCCHCRHLIFEKTGSAITUQCKENLPSLCSUQGLRAEENITESCQURLPPAAUQISQQLIPTEASASURUKNQAKKUEUPSN.

The first 19 residues, methionine 1–threonine 19, serve as a signal peptide directing secretion. A glycan (N-linked (GlcNAc...) asparagine) is linked at asparagine 46. Residue selenocysteine 59 is a non-standard amino acid, selenocysteine. Asparagine 83 is a glycosylation site (N-linked (GlcNAc...) (complex) asparagine). Asparagine 119, asparagine 128, and asparagine 174 each carry an N-linked (GlcNAc...) asparagine glycan. Positions threonine 200–aspartate 268 are disordered. A compositionally biased stretch (basic residues) spans histidine 204–glutamine 216. The span at leucine 218–glycine 230 shows a compositional bias: polar residues. The span at leucine 243–glutamine 255 shows a compositional bias: basic residues. Position 266 is a phosphoserine (serine 266). 3 non-standard amino acids (selenocysteine) are found at residues selenocysteine 300, selenocysteine 318, and selenocysteine 330. An N-linked (GlcNAc...) asparagine glycan is attached at asparagine 338. 6 non-standard amino acids (selenocysteine) are found at residues selenocysteine 345, selenocysteine 352, selenocysteine 367, selenocysteine 369, selenocysteine 376, and selenocysteine 378. Residues serine 355–asparagine 381 are disordered.

This sequence belongs to the selenoprotein P family. Phosphorylation sites are present in the extracellular medium. As to expression, made in the liver and heart and secreted into the plasma. It is also found in the kidney.

The protein localises to the secreted. Functionally, might be responsible for some of the extracellular antioxidant defense properties of selenium or might be involved in the transport of selenium. May supply selenium to tissues such as brain and testis. The sequence is that of Selenoprotein P from Homo sapiens (Human).